A 469-amino-acid polypeptide reads, in one-letter code: Nuclear hormone receptor family member nhr-154 (469 aa).

The segment at residues 80–159 is a DNA-binding region (nuclear receptor); that stretch reads PSKCLVCRNP…VGMNPMAIQA (80 aa). 2 consecutive NR C4-type zinc fingers follow at residues 83 to 103 and 119 to 142; these read CLVCRNPAIGYHYDVPSCNGC and CAKQKKCMDGTEPVDMSKRLCRAC. Residues 230–459 form the NR LBD domain; that stretch reads LDSKPVLVVT…KMGTTFRKCI (230 aa).

It belongs to the nuclear hormone receptor family.

The protein localises to the nucleus. Its function is as follows. Orphan nuclear receptor. The sequence is that of Nuclear hormone receptor family member nhr-154 (nhr-154) from Caenorhabditis elegans.